A 147-amino-acid chain; its full sequence is Hemoglobin subunit beta (147 aa).

The 145-residue stretch at 3–147 (EWTDSERAII…VVSALGREYH (145 aa)) folds into the Globin domain. Histidine 64 and histidine 93 together coordinate heme b.

It belongs to the globin family. Heterotetramer of two alpha chains and two beta chains. Red blood cells.

In terms of biological role, involved in oxygen transport from gills to the various peripheral tissues. This chain is Hemoglobin subunit beta (hbb), found in Gadus morhua (Atlantic cod).